Reading from the N-terminus, the 352-residue chain is RAD51-associated protein 1 (352 aa).

The span at 1–10 (MVRPVRHKKP) shows a compositional bias: basic residues. Disordered stretches follow at residues 1–78 (MVRP…TFSI) and 115–144 (TNVQ…HISN). Phosphoserine is present on residues Ser19 and Ser21. The interval 30 to 49 (VPLNKKSRTAPKELKQDKPK) is interaction with DNA. Positions 39–72 (APKELKQDKPKPNLNNLRKEEIPVQEKTPKKRLP) are enriched in basic and acidic residues. Residue Thr66 is modified to Phosphothreonine. Phosphoserine is present on residues Ser120 and Ser124. The segment covering 132 to 144 (KIETMNKSPHISN) has biased composition (polar residues). Positions 154-159 (LDKITV) match the SIM motif motif. A disordered region spans residues 162–323 (DVGGVQGKRK…RSSSSPLVVV (162 aa)). Residues 188-221 (SDGDSANDTEPDFAPGEDSEDDSDFCESEDNDED) show a composition bias toward acidic residues. The segment covering 229 to 247 (VKEIKKKEVKVKSPVEKKE) has biased composition (basic and acidic residues). The interval 243–304 (VEKKEKKSKS…PSAESKKPKW (62 aa)) is interaction with DNA. A Glycyl lysine isopeptide (Lys-Gly) (interchain with G-Cter in ubiquitin; alternate) cross-link involves residue Lys251. Lys269 is covalently cross-linked (Glycyl lysine isopeptide (Lys-Gly) (interchain with G-Cter in SUMO)). A compositionally biased stretch (polar residues) spans 270–284 (SESQSLPKKVSLSSD). Ser280 is subject to Phosphoserine. The short motif at 304–307 (WVPP) is the WVPP motif element. The segment covering 306-323 (PPAASGGSRSSSSPLVVV) has biased composition (low complexity). Residues 313–352 (SRSSSSPLVVVSVKSPNQSLRLGLSRLARVKPLHPNATST) form an interaction with RAD51 region. Residue Ser327 is modified to Phosphoserine.

Monomer; elongated monodisperse monomer. Interacts (via C-terminal region) with RAD51; the interaction is direct. Interacts (via SIM motif) with WDR48/UAF1; WDR48/UAF1 and RAD51AP1 cooperate together to stimulate RAD51-mediated homologous recombination (HR). Interacts (via WVPP motif) with DMC1; the interaction is direct. Interacts with PALB2. Interacts with RAD52. As to quaternary structure, does not interact with DMC1; lack of interaction is caused by the absence of the WVPP motif in this isoform. Post-translationally, sumoylation with SUMO2/3 by NSMCE2/MMS21 promotes stabilization, possibly by preventing ubiquitination. Sumoylation is required for alternative lengthening of telomeres (ALT) pathway. Highly expressed in testis and thymus. Lower levels in colon and small intestine. Little or no expression in spleen, prostate, ovary and peripheral blood leukocytes.

Its subcellular location is the chromosome. The protein resides in the nucleus. The protein localises to the telomere. Structure-specific DNA-binding protein involved in DNA repair by promoting RAD51-mediated homologous recombination. Acts by stimulating D-Loop formation by RAD51: specifically enhances joint molecule formation through its structure-specific DNA interaction and its interaction with RAD51. Binds single-stranded DNA (ssDNA), double-stranded DNA (dsDNA) and secondary DNA structures, such as D-loop structures: has a strong preference for branched-DNA structures that are obligatory intermediates during joint molecule formation. Cooperates with WDR48/UAF1 to stimulate RAD51-mediated homologous recombination: both WDR48/UAF1 and RAD51AP1 have coordinated role in DNA-binding during homologous recombination and DNA repair. WDR48/UAF1 and RAD51AP1 also have a coordinated role in DNA-binding to promote USP1-mediated deubiquitination of FANCD2. Also involved in meiosis by promoting DMC1-mediated homologous meiotic recombination. Key mediator of alternative lengthening of telomeres (ALT) pathway, a homology-directed repair mechanism of telomere elongation that controls proliferation in aggressive cancers, by stimulating homologous recombination. May also bind RNA; additional evidences are however required to confirm RNA-binding in vivo. This chain is RAD51-associated protein 1, found in Homo sapiens (Human).